The primary structure comprises 774 residues: Acetyl-CoA decarbonylase/synthase complex subunit alpha (774 aa).

[4Fe-4S] cluster contacts are provided by cysteine 73, cysteine 76, cysteine 77, cysteine 79, cysteine 84, and cysteine 94. Histidine 117 is a CO binding site. [Ni-4Fe-4S] cluster contacts are provided by histidine 251, cysteine 279, and cysteine 318. 4Fe-4S ferredoxin-type domains follow at residues 398-427 (LNEV…VKEA) and 436-466 (FKGF…VSMT). [4Fe-4S] cluster is bound by residues cysteine 408, cysteine 411, cysteine 414, cysteine 418, cysteine 446, cysteine 449, cysteine 452, and cysteine 456. The [Ni-4Fe-4S] cluster site is built by cysteine 514, cysteine 543, and cysteine 578.

Belongs to the Ni-containing carbon monoxide dehydrogenase family. In terms of assembly, heterotetramer of two alpha and two epsilon subunits. The ACDS complex is made up of alpha, epsilon, beta, gamma and delta subunits with a probable stoichiometry of (alpha(2)epsilon(2))(4)-beta(8)-(gamma(1)delta(1))(8). The cofactor is [4Fe-4S] cluster. [Ni-4Fe-4S] cluster is required as a cofactor.

It catalyses the reaction CO + 2 oxidized [2Fe-2S]-[ferredoxin] + H2O = 2 reduced [2Fe-2S]-[ferredoxin] + CO2 + 2 H(+). Part of the ACDS complex that catalyzes the reversible cleavage of acetyl-CoA, allowing autotrophic growth from CO(2). The alpha-epsilon subcomponent functions as a carbon monoxide dehydrogenase. This chain is Acetyl-CoA decarbonylase/synthase complex subunit alpha, found in Methanocaldococcus jannaschii (strain ATCC 43067 / DSM 2661 / JAL-1 / JCM 10045 / NBRC 100440) (Methanococcus jannaschii).